Reading from the N-terminus, the 112-residue chain is Putative pterin-4-alpha-carbinolamine dehydratase (112 aa).

Belongs to the pterin-4-alpha-carbinolamine dehydratase family.

It carries out the reaction (4aS,6R)-4a-hydroxy-L-erythro-5,6,7,8-tetrahydrobiopterin = (6R)-L-erythro-6,7-dihydrobiopterin + H2O. This chain is Putative pterin-4-alpha-carbinolamine dehydratase, found in Shewanella sp. (strain ANA-3).